The primary structure comprises 402 residues: Phosphoglycerate kinase (402 aa).

Residues 21–23, R36, 59–62, R118, and R151 contribute to the substrate site; these read DFN and HLGR. ATP is bound by residues K201, G293, E324, and 353–356; that span reads GGDS.

The protein belongs to the phosphoglycerate kinase family. In terms of assembly, monomer.

The protein resides in the cytoplasm. It catalyses the reaction (2R)-3-phosphoglycerate + ATP = (2R)-3-phospho-glyceroyl phosphate + ADP. Its pathway is carbohydrate degradation; glycolysis; pyruvate from D-glyceraldehyde 3-phosphate: step 2/5. The sequence is that of Phosphoglycerate kinase from Thermosipho africanus (strain TCF52B).